The primary structure comprises 423 residues: Cytochrome c biogenesis protein Ccs1 (423 aa).

Helical transmembrane passes span 11–31 (LKFA…GSII), 70–90 (NFWF…CTFF), and 153–173 (IAPV…IFAS).

Belongs to the Ccs1/CcsB family. As to quaternary structure, may interact with CcsA.

The protein resides in the plastid. The protein localises to the chloroplast thylakoid membrane. Required during biogenesis of c-type cytochromes (cytochrome c6 and cytochrome f) at the step of heme attachment. The protein is Cytochrome c biogenesis protein Ccs1 of Heterosigma akashiwo (strain NIES-293 / 8280G21-1).